The following is a 389-amino-acid chain: Aspartic protease pepA (389 aa).

The N-terminal stretch at 1-20 (MVLINQLGAVLAVCATLTVA) is a signal peptide. Positions 21–67 (APTKGKARFNVPQVAIPKKMVHHPAVSYARALHKFGMKVPKTVQDAA) are cleaved as a propeptide — activation peptide. The region spanning 82-386 (YVTQVTVGEG…DTQGPRIGFA (305 aa)) is the Peptidase A1 domain. The active site involves D98. A glycan (N-linked (GlcNAc...) asparagine) is linked at N257. Residue D279 is part of the active site. A disulfide bond links C315 and C348.

Belongs to the peptidase A1 family. As to quaternary structure, monomer.

Its subcellular location is the secreted. In terms of biological role, secreted aspartic endopeptidase that allows assimilation of proteinaceous substrates. The scissile peptide bond is attacked by a nucleophilic water molecule activated by two aspartic residues in the active site. Shows a broad primary substrate specificity. Favors hydrophobic residues at the P1 and P1' positions. The sequence is that of Aspartic protease pepA from Arthroderma otae (strain ATCC MYA-4605 / CBS 113480) (Microsporum canis).